The following is a 414-amino-acid chain: Probable protein phosphatase 2C 9 (414 aa).

Residues 15–37 (TATAAVAAAVSASAAAAVSSAID) traverse the membrane as a helical segment. The interval 56–95 (LQAGEDGRPGKRQRLARTASGAPRPDEDSASERPSCGRTE) is disordered. One can recognise a PPM-type phosphatase domain in the interval 99 to 410 (RYGVTAVCGR…DNVSVVVVDL (312 aa)). Residues aspartate 136 and glycine 137 each contribute to the Mn(2+) site. A compositionally biased stretch (basic and acidic residues) spans 186-195 (GNRASTRSDD). Positions 186–212 (GNRASTRSDDEPACPCEQQTPSRRDHA) are disordered. Aspartate 319 provides a ligand contact to Mn(2+). Residues 345–372 (APAARPSGVPSSAEAAETENGGAASVKG) form a disordered region. Over residues 355–369 (SSAEAAETENGGAAS) the composition is skewed to low complexity. A Mn(2+)-binding site is contributed by aspartate 401.

The protein belongs to the PP2C family. Mg(2+) serves as cofactor. It depends on Mn(2+) as a cofactor.

It localises to the membrane. The catalysed reaction is O-phospho-L-seryl-[protein] + H2O = L-seryl-[protein] + phosphate. It catalyses the reaction O-phospho-L-threonyl-[protein] + H2O = L-threonyl-[protein] + phosphate. This is Probable protein phosphatase 2C 9 from Oryza sativa subsp. japonica (Rice).